Here is a 278-residue protein sequence, read N- to C-terminus: Chitosanase (278 aa).

The first 41 residues, 1-41, serve as a signal peptide directing secretion; that stretch reads MRLKHPTARLALAALLVAVPRSVAAAGTVHAAPAPAGATRL. Residue glutamate 63 is the Proton donor of the active site. The active-site Nucleophile is aspartate 81.

Belongs to the glycosyl hydrolase 46 family.

The protein resides in the secreted. It carries out the reaction Endohydrolysis of beta-(1-&gt;4)-linkages between D-glucosamine residues in a partly acetylated chitosan.. Its function is as follows. Aids in the defense against invading fungal pathogens by degrading their cell wall chitosan. In Nocardioides sp. (strain N106), this protein is Chitosanase (csn).